Consider the following 150-residue polypeptide: Putative STAG3-like protein 4 (150 aa).

This sequence belongs to the SCC3 family.

The protein is Putative STAG3-like protein 4 (STAG3L4) of Homo sapiens (Human).